Reading from the N-terminus, the 118-residue chain is Large ribosomal subunit protein uL22 (118 aa).

It belongs to the universal ribosomal protein uL22 family. Part of the 50S ribosomal subunit.

Functionally, this protein binds specifically to 23S rRNA; its binding is stimulated by other ribosomal proteins, e.g. L4, L17, and L20. It is important during the early stages of 50S assembly. It makes multiple contacts with different domains of the 23S rRNA in the assembled 50S subunit and ribosome. The globular domain of the protein is located near the polypeptide exit tunnel on the outside of the subunit, while an extended beta-hairpin is found that lines the wall of the exit tunnel in the center of the 70S ribosome. This is Large ribosomal subunit protein uL22 from Levilactobacillus brevis (strain ATCC 367 / BCRC 12310 / CIP 105137 / JCM 1170 / LMG 11437 / NCIMB 947 / NCTC 947) (Lactobacillus brevis).